The primary structure comprises 901 residues: HTH-type transcriptional regulator MalT (901 aa).

39 to 46 is a binding site for ATP; the sequence is SPAGYGKT. The 66-residue stretch at 829–894 folds into the HTH luxR-type domain; sequence ELIRTSPLTQ…DAVQHAQQLL (66 aa). Positions 853–872 form a DNA-binding region, H-T-H motif; that stretch reads NEQIAGELAVAATTIKTHIR.

Belongs to the MalT family. In terms of assembly, monomer in solution. Oligomerizes to an active state in the presence of the positive effectors ATP and maltotriose.

Activated by ATP and maltotriose, which are both required for DNA binding. Its function is as follows. Positively regulates the transcription of the maltose regulon whose gene products are responsible for uptake and catabolism of malto-oligosaccharides. Specifically binds to the promoter region of its target genes, recognizing a short DNA motif called the MalT box. The chain is HTH-type transcriptional regulator MalT from Salmonella typhimurium (strain LT2 / SGSC1412 / ATCC 700720).